Reading from the N-terminus, the 471-residue chain is MQVTETLNEGLKREIKVVVPAGDLEAKLAERLETARGRARINGFRPGKVPTAHLRKMYGKSFMAEIVNEILNDSSRSILAERNEKSATQPEVIMSEDEKEAEKVLDGKADFVFSLNYEVLPAIEVKDFSKIAVTREVVDISDEEVDEQVKRIASSTRTFETKKGKAENEDRVTIDYLGKLDGEPFEGGADNDAQLVLGSGQFIPGFEEQLIGLKAGDEKVITVTFPAEYGAAHLAGKEATFDIKVKEVAKPNELVLDDETAKKLGIESLERLRQVVREQIESQYGQITRQKVKRQILDALDGDYQFETPQKLVDAEFNNIWQQINFDLQQAGRTFEDEETTEEAAREEYRKLAERRVRLGLVLSEIGEKAGVEVTEEELQRAVYDQVRRYPGQEKEIYDFLRRTPDAVANLRAPIFEEKVVDHLLANINVTDKKVSKEELTAEDEDAASEAKPAKKAAAKKKAEEGKSEEA.

The PPIase FKBP-type domain occupies 169–254 (EDRVTIDYLG…VKEVAKPNEL (86 aa)). The interval 435–471 (VSKEELTAEDEDAASEAKPAKKAAAKKKAEEGKSEEA) is disordered. The segment covering 461-471 (KKAEEGKSEEA) has biased composition (basic and acidic residues).

It belongs to the FKBP-type PPIase family. Tig subfamily.

Its subcellular location is the cytoplasm. The enzyme catalyses [protein]-peptidylproline (omega=180) = [protein]-peptidylproline (omega=0). Its function is as follows. Involved in protein export. Acts as a chaperone by maintaining the newly synthesized protein in an open conformation. Functions as a peptidyl-prolyl cis-trans isomerase. The protein is Trigger factor of Brucella abortus (strain S19).